The chain runs to 933 residues: Clumping factor A (933 aa).

The signal sequence occupies residues 1-39; that stretch reads MNMKKKEKHAIRKKSIGVASVLVGTLIGFGLLSSKEADA. The YSIRK-G/S signaling motif motif lies at 9–20; it reads HAIRKKSIGVAS. Disordered stretches follow at residues 34–200 and 529–904; these read SKEA…SNKD and FNNG…SEDE. A ligand binding A region region spans residues 40-542; it reads SENSVTQSDS…SGSGDGIDKP (503 aa). The segment covering 47–65 has biased composition (low complexity); sequence SDSASNESKSNDSSSVSAA. Residues 71–105 show a composition bias toward polar residues; that stretch reads TNVSDTKTSSNTNNGETSVAQNPAQQETTQSSSTN. Low complexity predominate over residues 106–132; the sequence is ATTEETPVTGEATTTTTNQANTPATTQ. Residues 133–200 are compositionally biased toward polar residues; the sequence is SSNTNAEELV…PQSTDASNKD (68 aa). Acidic residues predominate over residues 547 to 565; the sequence is QPDEPGEIEPIPEDSDSDP. The span at 566–598 shows a compositional bias: low complexity; sequence GSDSGSDSNSDSGSDSGSDSTSDSGSDSASDSD. Residues 599-861 show a composition bias toward acidic residues; it reads SASDSDSASD…DSDSESDSNS (263 aa). Positions 862-880 are enriched in low complexity; sequence DSESGSNNNVVPPNSPKNG. Basic and acidic residues predominate over residues 887 to 896; it reads NEAKDSKEPL. Positions 896–900 match the LPXTG sorting signal motif; it reads LPDTG. T899 carries the pentaglycyl murein peptidoglycan amidated threonine modification. The propeptide at 900–933 is removed by sortase; the sequence is GSEDEANTSLIWGLLASIGSLLLFRRKKENKDKK.

The protein belongs to the serine-aspartate repeat-containing protein (SDr) family.

It is found in the secreted. Its subcellular location is the cell wall. Functionally, cell surface-associated protein implicated in virulence. Promotes bacterial attachment exclusively to the gamma-chain of human fibrinogen. Induces formation of bacterial clumps, which diminish the ability of group IIA phospholipase A2 to cause bacterial phospholipid hydrolysis and killing. Significantly decreases macrophage phagocytosis possibly thanks to the clumps, clumped bacteria being too large to be phagocytosed. Dominant factor responsible for human platelet aggregation, which may be an important mechanism for initiating infective endocarditis. Enhances spleen cell proliferative response in vitro, contributing significantly to the immunostimulatory activity of S.aureus. The sequence is that of Clumping factor A (clfA) from Staphylococcus aureus (strain Newman).